The primary structure comprises 150 residues: UPF0039 protein C11D3.02c (150 aa).

In terms of domain architecture, N-acetyltransferase spans 9–150 (KYFNSLDVKE…IPHVEMRLEL (142 aa)).

This sequence belongs to the UPF0039 (ElaA) family.

This chain is UPF0039 protein C11D3.02c, found in Schizosaccharomyces pombe (strain 972 / ATCC 24843) (Fission yeast).